Consider the following 423-residue polypeptide: Glycine amidinotransferase, mitochondrial (423 aa).

A mitochondrion-targeting transit peptide spans 1 to 43; the sequence is MLRVRCLRGGSRGAEAVHYIGSRLGGSLTGWVQRTFQSTQAAT. 2 positions are modified to phosphoserine: serine 46 and serine 49. Arginine is bound at residue aspartate 170. Catalysis depends on residues aspartate 254 and histidine 303. Arginine-binding residues include aspartate 305, arginine 322, serine 354, and serine 355. The residue at position 385 (lysine 385) is an N6-acetyllysine. Cysteine 407 (amidino-cysteine intermediate) is an active-site residue.

Belongs to the amidinotransferase family. In terms of assembly, homodimer. Highly expressed in the kidney and pancreas, especially in the proximal tubules of the kidney, and alpha cells of the pancreatic islets (at protein level). Moderately expressed in liver hepatocytes (at protein level). Expressed in the kidney, pancreas, liver, colon, ileum, jejunum, heart and skeletal muscle. In reproductive tissues, expressed in the testis, epididymis, ovary, oviduct and uterus. Expressed throughout the brain in neurons, astrocytes and oligodendrocytes. In 12.5 dpc embryos, it is expressed in the middle part of the somites, hepatic primordium and wall of the dorsal aorta. Expressed in 15.5 dpc embryos in isolated cells throughout the central nervous system, skeletal muscles, gonad primordia, caudal somites, liver and pancreas, but not in the choroid plexus, root ganglia or kidney. Expressed in skeletal muscle, kidney, pancreas, central nervous system, liver and intestine epithelial cells, but not in epidermis, dermis, olfactory epithelium, trachea, lung, stomach or heart in 18.5 dpc embryos.

Its subcellular location is the mitochondrion inner membrane. The enzyme catalyses L-arginine + glycine = guanidinoacetate + L-ornithine. It carries out the reaction 4-aminobutanoate + L-arginine = 4-guanidinobutanoate + L-ornithine. The catalysed reaction is beta-alanine + L-arginine = 3-guanidinopropanoate + L-ornithine. It catalyses the reaction taurine + L-arginine = taurocyamine + L-ornithine. It functions in the pathway amine and polyamine biosynthesis; creatine biosynthesis; creatine from L-arginine and glycine: step 1/2. Its function is as follows. Transamidinase that catalyzes the transfer of the amidino group of L-arginine onto the amino moiety of acceptor metabolites such as glycine, beta-alanine, gamma-aminobutyric acid (GABA) and taurine yielding the corresponding guanidine derivatives. Catalyzes the rate-limiting step of creatine biosynthesis, namely the transfer of the amidino group from L-arginine to glycine to generate guanidinoacetate, which is then methylated by GAMT to form creatine. Provides creatine as a source for ATP generation in tissues with high energy demands, in particular skeletal muscle, heart and brain. The chain is Glycine amidinotransferase, mitochondrial (Gatm) from Rattus norvegicus (Rat).